Here is a 445-residue protein sequence, read N- to C-terminus: Histone acetyltransferase of the MYST family 1 (445 aa).

One can recognise a Tudor-knot domain in the interval 60–118 (LEVGTRVMCQWRDGKYHPVKVIERRKNYNGGHNDYEYYVHYTEFNRRLDEWIKLEQLDL). The MYST-type HAT domain occupies 169–440 (TKVKNIATIE…VDVSKMIWTP (272 aa)). The segment at 202 to 227 (LFFCEFCLSFMKRKEQLQRHMRKCDL) adopts a C2HC MYST-type zinc-finger fold. An N6-acetyllysine; by autocatalysis modification is found at lysine 269. Acetyl-CoA is bound by residues 312-314 (ILT) and 319-325 (QRKGYGK). The Proton donor/acceptor role is filled by glutamate 345. Serine 349 provides a ligand contact to acetyl-CoA.

This sequence belongs to the MYST (SAS/MOZ) family. As to quaternary structure, interacts with MRG1 and MRG2. Component of the NuA4 histone acetyltransferase complex. In terms of processing, autoacetylation at Lys-269 is required for proper function. In terms of tissue distribution, expressed in cotyledons, leaves, stems, roots and, at higher levels in developing flowers, particularly in the anthers and gynoecia. Constitutively expressed in all tissues, predominantly in shoot apical meristem.

It is found in the nucleus. The catalysed reaction is L-lysyl-[protein] + acetyl-CoA = N(6)-acetyl-L-lysyl-[protein] + CoA + H(+). In terms of biological role, histone acetyltransferase which may be involved in transcriptional activation. Acetylates 'Lys-5' of histone H4 (H4K5ac). Essential for gametophyte development. Involved in DNA repair after UV-B exposure. Negative regulator of flowering controlling the H4K5ac levels in the FLC chromatin. This is Histone acetyltransferase of the MYST family 1 from Arabidopsis thaliana (Mouse-ear cress).